We begin with the raw amino-acid sequence, 547 residues long: Chaperonin GroEL (547 aa).

Residues 30-33, Lys-51, 87-91, Gly-415, 479-481, and Asp-495 each bind ATP; these read TLGP, DGTTT, and NAA.

The protein belongs to the chaperonin (HSP60) family. As to quaternary structure, forms a cylinder of 14 subunits composed of two heptameric rings stacked back-to-back. Interacts with the co-chaperonin GroES.

The protein resides in the cytoplasm. It catalyses the reaction ATP + H2O + a folded polypeptide = ADP + phosphate + an unfolded polypeptide.. Its function is as follows. Together with its co-chaperonin GroES, plays an essential role in assisting protein folding. The GroEL-GroES system forms a nano-cage that allows encapsulation of the non-native substrate proteins and provides a physical environment optimized to promote and accelerate protein folding. In Cupriavidus pinatubonensis (strain JMP 134 / LMG 1197) (Cupriavidus necator (strain JMP 134)), this protein is Chaperonin GroEL.